A 517-amino-acid chain; its full sequence is UDP-N-acetylmuramoylalanine--D-glutamate ligase (517 aa).

Residue 143–149 (GTNGKTT) coordinates ATP.

The protein belongs to the MurCDEF family.

The protein resides in the cytoplasm. The enzyme catalyses UDP-N-acetyl-alpha-D-muramoyl-L-alanine + D-glutamate + ATP = UDP-N-acetyl-alpha-D-muramoyl-L-alanyl-D-glutamate + ADP + phosphate + H(+). The protein operates within cell wall biogenesis; peptidoglycan biosynthesis. Cell wall formation. Catalyzes the addition of glutamate to the nucleotide precursor UDP-N-acetylmuramoyl-L-alanine (UMA). The protein is UDP-N-acetylmuramoylalanine--D-glutamate ligase of Leifsonia xyli subsp. xyli (strain CTCB07).